Consider the following 504-residue polypeptide: Maturase K (504 aa).

Belongs to the intron maturase 2 family. MatK subfamily.

The protein resides in the plastid. It is found in the chloroplast. Usually encoded in the trnK tRNA gene intron. Probably assists in splicing its own and other chloroplast group II introns. This is Maturase K from Olimarabidopsis pumila (Dwarf rocket).